Here is a 234-residue protein sequence, read N- to C-terminus: Membrane glycoprotein RL11 (234 aa).

An N-terminal signal peptide occupies residues 1–23 (MQTYSTPLTLIIVTSLFLFTTQG). Residues 183–203 (LHCAWVSGLMIFVGALVICFL) form a helical membrane-spanning segment.

The protein localises to the host membrane. This Human cytomegalovirus (strain Merlin) (HHV-5) protein is Membrane glycoprotein RL11 (RL11).